The primary structure comprises 701 residues: Potassium-transporting ATPase ATP-binding subunit 1 (701 aa).

Residues 1 to 26 (MNPVAPTRKVKPPRNRPSDRRQARKK) form a disordered region. The next 4 helical transmembrane spans lie at 57–77 (MFVV…PDLF), 90–110 (GLLT…EAVA), 241–261 (VALT…IATL), and 278–298 (IALL…AIGI). Catalysis depends on D329, which acts as the 4-aspartylphosphate intermediate. ATP is bound by residues D366, E370, 397-404 (FSAKTRMS), and K416. The Mg(2+) site is built by D539 and D543. A run of 3 helical transmembrane segments spans residues 599 to 619 (FSIA…FAAA), 635 to 655 (AVLS…PLAL), and 681 to 701 (VIAP…VGLA).

This sequence belongs to the cation transport ATPase (P-type) (TC 3.A.3) family. Type IA subfamily. In terms of assembly, the system is composed of three essential subunits: KdpA, KdpB and KdpC.

The protein localises to the cell inner membrane. The enzyme catalyses K(+)(out) + ATP + H2O = K(+)(in) + ADP + phosphate + H(+). Its function is as follows. Part of the high-affinity ATP-driven potassium transport (or Kdp) system, which catalyzes the hydrolysis of ATP coupled with the electrogenic transport of potassium into the cytoplasm. This subunit is responsible for energy coupling to the transport system and for the release of the potassium ions to the cytoplasm. The protein is Potassium-transporting ATPase ATP-binding subunit 1 of Nostoc sp. (strain PCC 7120 / SAG 25.82 / UTEX 2576).